A 466-amino-acid chain; its full sequence is Communesin N16 acyltransferase cnsK (466 aa).

It belongs to the fumigaclavine B O-acetyltransferase family.

It participates in alkaloid biosynthesis. Functionally, communesin N16 acyltransferase; part of the gene cluster that mediates the biosynthesis of communesins, a prominent class of indole alkaloids with great potential as pharmaceuticals. Communesins are biosynthesized by the coupling of tryptamine and aurantioclavine, two building blocks derived from L-tryptophan. The L-tryptophan decarboxylase cnsB converts L-tryptophan to tryptamine, whereas the tryptophan dimethylallyltransferase cnsF converts L-tryptophan to 4-dimethylallyl tryptophan which is further transformed to aurantioclavine by the aurantioclavine synthase cnsA, probably aided by the catalase cnsD. The cytochrome P450 monooxygenase cnsC catalyzes the heterodimeric coupling between the two different indole moieties, tryptamine and aurantioclavine, to construct vicinal quaternary stereocenters and yield the heptacyclic communesin scaffold. The O-methyltransferase cnsE then methylates the communesin scaffold to produce communesin K, the simplest characterized communesin that contains the heptacyclic core. The dioxygenase cnsJ converts communesin K into communesin I. Acylation to introduce the hexadienyl group at position N16 of communesin I by the acyltransferase cnsK leads to the production of communesin B. The hexadienyl group is produced by the highly reducing polyketide synthase cnsI, before being hydrolytically removed from cnsI by the serine hydrolase cnsH, converted into hexadienyl-CoA by the CoA ligase cnsG, and then transferred to communesin I by cnsK. Surprisingly, cnsK may also be a promiscuous acyltransferase that can tolerate a range of acyl groups, including acetyl-, propionyl-, and butyryl-CoA, which lead to communesins A, G and H respectively. The roles of the alpha-ketoglutarate-dependent dioxygenases cnsM and cnsP have still to be determined. The chain is Communesin N16 acyltransferase cnsK from Penicillium expansum (Blue mold rot fungus).